We begin with the raw amino-acid sequence, 409 residues long: Nucleoprotein (409 aa).

Disordered stretches follow at residues 1–32, 46–69, 120–193, and 238–259; these read MASGKATGKTDAPAPVIKLGGPKPPKVGSSGN, SPPLKFEGSGVPDNENLKTSQQHG, GADT…SGAE, and VDQVFGPRTKGKEGNFGDDKMN. Residues 15-31 show a composition bias toward low complexity; that stretch reads PVIKLGGPKPPKVGSSG. The interval 29–160 is RNA-binding; it reads SSGNASWFQA…GNFRWDFIPL (132 aa). The region spanning 31–156 is the CoV N NTD domain; it reads GNASWFQAIK…GGPDGNFRWD (126 aa). The segment covering 162–179 has biased composition (low complexity); that stretch reads RGRSGKSTAASSAASSRA. Basic and acidic residues-rich tracts occupy residues 180–192 and 247–259; these read PSREGSRGRRSGA and KGKEGNFGDDKMN. Position 190 is a phosphoserine; by host (serine 190). A CoV N CTD domain is found at 215–331; it reads TKAKADEMAH…QCVDGVGTRP (117 aa). The tract at residues 226-333 is dimerization; that stretch reads RYCKRTIPPG…VDGVGTRPKD (108 aa). Residues cysteine 320 and cysteine 323 are joined by a disulfide bond. The disordered stretch occupies residues 327–409; it reads VGTRPKDDEP…GDSALGENEL (83 aa). Residues 341-354 are compositionally biased toward low complexity; that stretch reads RSSSRPATRTSSPA. Basic residues predominate over residues 358–367; sequence PRPKKEKKTK. A compositionally biased stretch (basic and acidic residues) spans 368–384; the sequence is KQDDEVDKALTSDEERN. At threonine 378 the chain carries Phosphothreonine; by host. Position 379 is a phosphoserine; by host (serine 379).

The protein belongs to the gammacoronavirus nucleocapsid protein family. As to quaternary structure, homooligomer. Both monomeric and oligomeric forms interact with RNA. Interacts with protein M. Interacts with NSP3; this interaction serves to tether the genome to the newly translated replicase-transcriptase complex at a very early stage of infection. Post-translationally, ADP-ribosylated. The ADP-ribosylation is retained in the virion during infection. In terms of processing, phosphorylated on serine and threonine residues.

It localises to the virion. It is found in the host endoplasmic reticulum-Golgi intermediate compartment. The protein resides in the host Golgi apparatus. Its function is as follows. Packages the positive strand viral genome RNA into a helical ribonucleocapsid (RNP) and plays a fundamental role during virion assembly through its interactions with the viral genome and membrane protein M. Plays an important role in enhancing the efficiency of subgenomic viral RNA transcription as well as viral replication. This is Nucleoprotein from Gallus gallus (Chicken).